We begin with the raw amino-acid sequence, 505 residues long: Glycerol kinase (505 aa).

Threonine 14 provides a ligand contact to ADP. ATP is bound by residues threonine 14, threonine 15, and serine 16. Sn-glycerol 3-phosphate is bound at residue threonine 14. Position 18 (arginine 18) interacts with ADP. Residues arginine 84, glutamate 85, tyrosine 136, and aspartate 246 each coordinate sn-glycerol 3-phosphate. Glycerol-binding residues include arginine 84, glutamate 85, tyrosine 136, aspartate 246, and glutamine 247. 2 residues coordinate ADP: threonine 268 and glycine 311. Positions 268, 311, 315, and 412 each coordinate ATP. 2 residues coordinate ADP: glycine 412 and asparagine 416.

It belongs to the FGGY kinase family.

It carries out the reaction glycerol + ATP = sn-glycerol 3-phosphate + ADP + H(+). It participates in polyol metabolism; glycerol degradation via glycerol kinase pathway; sn-glycerol 3-phosphate from glycerol: step 1/1. Its activity is regulated as follows. Inhibited by fructose 1,6-bisphosphate (FBP). Its function is as follows. Key enzyme in the regulation of glycerol uptake and metabolism. Catalyzes the phosphorylation of glycerol to yield sn-glycerol 3-phosphate. In Vibrio parahaemolyticus serotype O3:K6 (strain RIMD 2210633), this protein is Glycerol kinase.